A 503-amino-acid chain; its full sequence is Aromatase (503 aa).

A helical transmembrane segment spans residues 21 to 41 (VTVSAMPLLLIMGLLLLIWNC). Substrate-binding residues include aspartate 309 and methionine 374. Cysteine 437 contributes to the heme binding site.

The protein belongs to the cytochrome P450 family. The cofactor is heme.

The protein localises to the endoplasmic reticulum membrane. It localises to the microsome membrane. The catalysed reaction is testosterone + 3 reduced [NADPH--hemoprotein reductase] + 3 O2 = 17beta-estradiol + formate + 3 oxidized [NADPH--hemoprotein reductase] + 4 H2O + 4 H(+). It catalyses the reaction androst-4-ene-3,17-dione + 3 reduced [NADPH--hemoprotein reductase] + 3 O2 = estrone + formate + 3 oxidized [NADPH--hemoprotein reductase] + 4 H2O + 4 H(+). The enzyme catalyses androst-4-ene-3,17-dione + reduced [NADPH--hemoprotein reductase] + O2 = 19-hydroxyandrost-4-ene-3,17-dione + oxidized [NADPH--hemoprotein reductase] + H2O + H(+). It carries out the reaction 19-hydroxyandrost-4-ene-3,17-dione + reduced [NADPH--hemoprotein reductase] + O2 = 19-oxo-androst-4-ene-3,17-dione + oxidized [NADPH--hemoprotein reductase] + 2 H2O + H(+). The catalysed reaction is 19-oxo-androst-4-ene-3,17-dione + reduced [NADPH--hemoprotein reductase] + O2 = estrone + formate + oxidized [NADPH--hemoprotein reductase] + H2O + 2 H(+). It catalyses the reaction estrone + reduced [NADPH--hemoprotein reductase] + O2 = 2-hydroxyestrone + oxidized [NADPH--hemoprotein reductase] + H2O + H(+). The enzyme catalyses 17beta-hydroxy-5alpha-androstan-3-one + reduced [NADPH--hemoprotein reductase] + O2 = 17beta,19-dihydroxy-3-oxo-5alpha-androstanone + oxidized [NADPH--hemoprotein reductase] + H2O + H(+). It carries out the reaction 17beta,19-dihydroxy-3-oxo-5alpha-androstanone + reduced [NADPH--hemoprotein reductase] + O2 = 17beta-hydroxy-3,19-dioxo-5alpha-androstanone + oxidized [NADPH--hemoprotein reductase] + 2 H2O + H(+). The catalysed reaction is 17beta-hydroxy-3,19-dioxo-5alpha-androstanone + reduced [NADPH--hemoprotein reductase] + O2 = 17beta-hydroxy-3-oxo-19-nor-5alpha-androst-1-ene + formate + oxidized [NADPH--hemoprotein reductase] + H2O + 2 H(+). The protein operates within steroid hormone biosynthesis. Its function is as follows. A cytochrome P450 monooxygenase that catalyzes the conversion of C19 androgens, androst-4-ene-3,17-dione (androstenedione) and testosterone to the C18 estrogens, estrone and estradiol, respectively. Catalyzes three successive oxidations of C19 androgens: two conventional oxidations at C19 yielding 19-hydroxy and 19-oxo/19-aldehyde derivatives, followed by a third oxidative aromatization step that involves C1-beta hydrogen abstraction combined with cleavage of the C10-C19 bond to yield a phenolic A ring and formic acid. Alternatively, the third oxidative reaction yields a 19-norsteroid and formic acid. Converts dihydrotestosterone to delta1,10-dehydro 19-nordihydrotestosterone and may play a role in homeostasis of this potent androgen. Also displays 2-hydroxylase activity toward estrone. Mechanistically, uses molecular oxygen inserting one oxygen atom into a substrate, and reducing the second into a water molecule, with two electrons provided by NADPH via cytochrome P450 reductase (CPR; NADPH-ferrihemoprotein reductase). The protein is Aromatase (Cyp19a1) of Mus musculus (Mouse).